The chain runs to 514 residues: 2,3-bisphosphoglycerate-independent phosphoglycerate mutase (514 aa).

Residues Asp-12 and Ser-62 each coordinate Mn(2+). Ser-62 serves as the catalytic Phosphoserine intermediate. Residues His-123, 153 to 154 (RD), Arg-185, Arg-191, 260 to 263 (RPDR), and Lys-335 each bind substrate. 5 residues coordinate Mn(2+): Asp-402, His-406, Asp-443, His-444, and His-462.

Belongs to the BPG-independent phosphoglycerate mutase family. Monomer. Mn(2+) serves as cofactor.

It catalyses the reaction (2R)-2-phosphoglycerate = (2R)-3-phosphoglycerate. The protein operates within carbohydrate degradation; glycolysis; pyruvate from D-glyceraldehyde 3-phosphate: step 3/5. In terms of biological role, catalyzes the interconversion of 2-phosphoglycerate and 3-phosphoglycerate. This Lachnoclostridium phytofermentans (strain ATCC 700394 / DSM 18823 / ISDg) (Clostridium phytofermentans) protein is 2,3-bisphosphoglycerate-independent phosphoglycerate mutase.